We begin with the raw amino-acid sequence, 545 residues long: Chaperonin GroEL 2 (545 aa).

ATP-binding positions include 29-32 (TLGP), 86-90 (DGTTT), G413, 479-481 (NAA), and D495.

Belongs to the chaperonin (HSP60) family. In terms of assembly, forms a cylinder of 14 subunits composed of two heptameric rings stacked back-to-back. Interacts with the co-chaperonin GroES.

The protein resides in the cytoplasm. The enzyme catalyses ATP + H2O + a folded polypeptide = ADP + phosphate + an unfolded polypeptide.. Functionally, together with its co-chaperonin GroES, plays an essential role in assisting protein folding. The GroEL-GroES system forms a nano-cage that allows encapsulation of the non-native substrate proteins and provides a physical environment optimized to promote and accelerate protein folding. In Prochlorococcus marinus (strain MIT 9312), this protein is Chaperonin GroEL 2.